Here is a 68-residue protein sequence, read N- to C-terminus: DNA-directed RNA polymerase subunit omega (68 aa).

It belongs to the RNA polymerase subunit omega family. In terms of assembly, the RNAP catalytic core consists of 2 alpha, 1 beta, 1 beta' and 1 omega subunit. When a sigma factor is associated with the core the holoenzyme is formed, which can initiate transcription.

It carries out the reaction RNA(n) + a ribonucleoside 5'-triphosphate = RNA(n+1) + diphosphate. Promotes RNA polymerase assembly. Latches the N- and C-terminal regions of the beta' subunit thereby facilitating its interaction with the beta and alpha subunits. The polypeptide is DNA-directed RNA polymerase subunit omega (Neisseria gonorrhoeae (strain NCCP11945)).